The primary structure comprises 356 residues: Chorismate synthase (356 aa).

R44 provides a ligand contact to NADP(+). FMN contacts are provided by residues 121–123, G278, 293–297, and R320; these read HFS and KPTPS.

It belongs to the chorismate synthase family. The cofactor is FMNH2.

The catalysed reaction is 5-O-(1-carboxyvinyl)-3-phosphoshikimate = chorismate + phosphate. It functions in the pathway metabolic intermediate biosynthesis; chorismate biosynthesis; chorismate from D-erythrose 4-phosphate and phosphoenolpyruvate: step 7/7. Functionally, catalyzes the anti-1,4-elimination of the C-3 phosphate and the C-6 proR hydrogen from 5-enolpyruvylshikimate-3-phosphate (EPSP) to yield chorismate, which is the branch point compound that serves as the starting substrate for the three terminal pathways of aromatic amino acid biosynthesis. This reaction introduces a second double bond into the aromatic ring system. In Pyrococcus abyssi (strain GE5 / Orsay), this protein is Chorismate synthase.